We begin with the raw amino-acid sequence, 220 residues long: Fructose-6-phosphate aldolase (220 aa).

Lys85 (schiff-base intermediate with substrate) is an active-site residue.

It belongs to the transaldolase family. Type 3A subfamily. In terms of assembly, homodecamer.

It localises to the cytoplasm. It carries out the reaction beta-D-fructose 6-phosphate = dihydroxyacetone + D-glyceraldehyde 3-phosphate. Catalyzes the reversible formation of fructose 6-phosphate from dihydroxyacetone and D-glyceraldehyde 3-phosphate via an aldolization reaction. This chain is Fructose-6-phosphate aldolase, found in Salmonella typhi.